A 549-amino-acid polypeptide reads, in one-letter code: TBC1 domain family member 3L (549 aa).

Positions Gly101 to Gly293 constitute a Rab-GAP TBC domain. 2 S-palmitoyl cysteine lipidation sites follow: Cys318 and Cys325. A disordered region spans residues Leu350–Glu423. Residues Pro398–Pro417 are compositionally biased toward low complexity.

Ubiquitinated by a CUL7-based E3 ligase, which leads to proteasomal degradation. In terms of processing, palmitoylation is required for membrane localization and protects TBC1D3 from ubiquitination.

It localises to the cell membrane. Its function is as follows. Acts as a GTPase activating protein for RAB5. Does not act on RAB4 or RAB11. This is TBC1 domain family member 3L from Homo sapiens (Human).